Here is a 506-residue protein sequence, read N- to C-terminus: Maturase K (506 aa).

It belongs to the intron maturase 2 family. MatK subfamily.

It localises to the plastid. The protein localises to the chloroplast. Functionally, usually encoded in the trnK tRNA gene intron. Probably assists in splicing its own and other chloroplast group II introns. The protein is Maturase K of Trifolium incarnatum (Crimson clover).